We begin with the raw amino-acid sequence, 690 residues long: Ras guanyl-releasing protein 3 (690 aa).

Residues 3–125 (SSGLGKAATL…SLIDISSIPS (123 aa)) form the N-terminal Ras-GEF domain. Residues 152–383 (EPIELAEHLT…YKLSLVLEPR (232 aa)) enclose the Ras-GEF domain. EF-hand domains lie at 420–455 (HIRKLVESVFRNYDHDHDGYISQEDFESIAANFPFL) and 458–484 (FCVLDKDQDGLISKDEMMAYFLRAKSQ). Ca(2+)-binding residues include aspartate 433, aspartate 435, aspartate 437, tyrosine 439, aspartate 444, aspartate 462, aspartate 464, aspartate 466, and glutamate 473. Residues 494–544 (IHNFQEMTYLKPTFCEHCAGFLWGIIKQGYKCKDCGANCHKQCKDLLVLAC) form a Phorbol-ester/DAG-type zinc finger. Residues 667 to 690 (VDRGTEFELDQDEGEETRQDGEDG) form a disordered region.

The protein belongs to the RASGRP family.

Functionally, guanine nucleotide exchange factor (GEF) for Ras and Rap1. In Homo sapiens (Human), this protein is Ras guanyl-releasing protein 3 (RASGRP3).